The chain runs to 712 residues: Polyribonucleotide nucleotidyltransferase (712 aa).

Residues Asp-487 and Asp-493 each coordinate Mg(2+). In terms of domain architecture, KH spans 554 to 613 (PKILTMQINPEKIREVIGPSGKQINKIIDETGVKIDIEQDGTIFISSVNEAMNQKAKQII). The region spanning 623-691 (GQIYLGKVKR…KQGRVNLSRK (69 aa)) is the S1 motif domain.

This sequence belongs to the polyribonucleotide nucleotidyltransferase family. The cofactor is Mg(2+).

It is found in the cytoplasm. It carries out the reaction RNA(n+1) + phosphate = RNA(n) + a ribonucleoside 5'-diphosphate. Functionally, involved in mRNA degradation. Catalyzes the phosphorolysis of single-stranded polyribonucleotides processively in the 3'- to 5'-direction. In Geobacillus sp. (strain WCH70), this protein is Polyribonucleotide nucleotidyltransferase.